A 395-amino-acid polypeptide reads, in one-letter code: uncharacterized protein (395 aa).

An N-terminal signal peptide occupies residues 1–18 (MKHVIMLYFIAAATLFSS). C19 carries N-palmitoyl cysteine lipidation. C19 is lipidated: S-diacylglycerol cysteine.

The protein localises to the cell outer membrane. Its function is as follows. May be involved in ulvan degradation. Ulvan is the main polysaccharide component of the Ulvales (green seaweed) cell wall. It is composed of disaccharide building blocks comprising 3-sulfated rhamnose (Rha3S) linked to D-glucuronic acid (GlcA), L-iduronic acid (IduA), or D-xylose (Xyl). This is an uncharacterized protein from Formosa agariphila (strain DSM 15362 / KCTC 12365 / LMG 23005 / KMM 3901 / M-2Alg 35-1).